A 223-amino-acid polypeptide reads, in one-letter code: Trichome differentiation protein GL1 (223 aa).

HTH myb-type domains are found at residues N11–L63 and S64–L118. 2 consecutive DNA-binding regions (H-T-H motif) follow at residues W39–L63 and W91–L114.

It localises to the nucleus. In terms of biological role, regulates the production of a signal that induces hair (trichome) precursor cells on leaf primordia to differentiate. This is Trichome differentiation protein GL1 (GL1) from Arabidopsis lyrata (Lyre-leaved rock-cress).